The following is a 142-amino-acid chain: UPF0179 protein PH1477 (142 aa).

This sequence belongs to the UPF0179 family.

This chain is UPF0179 protein PH1477, found in Pyrococcus horikoshii (strain ATCC 700860 / DSM 12428 / JCM 9974 / NBRC 100139 / OT-3).